Here is a 347-residue protein sequence, read N- to C-terminus: NADH-quinone oxidoreductase subunit H (347 aa).

The next 8 membrane-spanning stretches (helical) occupy residues Ile25–Met45, Phe95–Ile115, Ile128–Gly148, Ile168–Phe188, Gly200–Val220, Phe251–Phe271, Phe284–Leu304, and Val324–Ser344.

It belongs to the complex I subunit 1 family. As to quaternary structure, NDH-1 is composed of 14 different subunits. Subunits NuoA, H, J, K, L, M, N constitute the membrane sector of the complex.

The protein localises to the cell inner membrane. It catalyses the reaction a quinone + NADH + 5 H(+)(in) = a quinol + NAD(+) + 4 H(+)(out). Its function is as follows. NDH-1 shuttles electrons from NADH, via FMN and iron-sulfur (Fe-S) centers, to quinones in the respiratory chain. The immediate electron acceptor for the enzyme in this species is believed to be ubiquinone. Couples the redox reaction to proton translocation (for every two electrons transferred, four hydrogen ions are translocated across the cytoplasmic membrane), and thus conserves the redox energy in a proton gradient. This subunit may bind ubiquinone. This is NADH-quinone oxidoreductase subunit H from Psychrobacter cryohalolentis (strain ATCC BAA-1226 / DSM 17306 / VKM B-2378 / K5).